The sequence spans 158 residues: Putative pre-16S rRNA nuclease (158 aa).

The tract at residues 138 to 158 (ELKPAQQTASRSGAGAGDGGS) is disordered.

Belongs to the YqgF nuclease family.

The protein resides in the cytoplasm. Could be a nuclease involved in processing of the 5'-end of pre-16S rRNA. In Synechococcus sp. (strain CC9605), this protein is Putative pre-16S rRNA nuclease.